Reading from the N-terminus, the 399-residue chain is Beta sliding clamp (399 aa).

This sequence belongs to the beta sliding clamp family. In terms of assembly, forms a ring-shaped head-to-tail homodimer around DNA which binds and tethers DNA polymerases and other proteins to the DNA. The DNA replisome complex has a single clamp-loading complex (3 tau and 1 each of delta, delta', psi and chi subunits) which binds 3 Pol III cores (1 core on the leading strand and 2 on the lagging strand) each with a beta sliding clamp dimer. Additional proteins in the replisome are other copies of gamma, psi and chi, Ssb, DNA helicase and RNA primase.

The protein resides in the cytoplasm. Functionally, confers DNA tethering and processivity to DNA polymerases and other proteins. Acts as a clamp, forming a ring around DNA (a reaction catalyzed by the clamp-loading complex) which diffuses in an ATP-independent manner freely and bidirectionally along dsDNA. Initially characterized for its ability to contact the catalytic subunit of DNA polymerase III (Pol III), a complex, multichain enzyme responsible for most of the replicative synthesis in bacteria; Pol III exhibits 3'-5' exonuclease proofreading activity. The beta chain is required for initiation of replication as well as for processivity of DNA replication. This is Beta sliding clamp (dnaN) from Mycobacterium leprae (strain TN).